The chain runs to 603 residues: Elongation factor 4 (603 aa).

One can recognise a tr-type G domain in the interval 7-191 (SNIRNFSIVA…AIVTRLPPPK (185 aa)). GTP contacts are provided by residues 19 to 24 (DHGKST) and 138 to 141 (NKVD).

Belongs to the TRAFAC class translation factor GTPase superfamily. Classic translation factor GTPase family. LepA subfamily.

The protein resides in the cell inner membrane. It carries out the reaction GTP + H2O = GDP + phosphate + H(+). In terms of biological role, required for accurate and efficient protein synthesis under certain stress conditions. May act as a fidelity factor of the translation reaction, by catalyzing a one-codon backward translocation of tRNAs on improperly translocated ribosomes. Back-translocation proceeds from a post-translocation (POST) complex to a pre-translocation (PRE) complex, thus giving elongation factor G a second chance to translocate the tRNAs correctly. Binds to ribosomes in a GTP-dependent manner. The chain is Elongation factor 4 from Bradyrhizobium diazoefficiens (strain JCM 10833 / BCRC 13528 / IAM 13628 / NBRC 14792 / USDA 110).